The sequence spans 305 residues: Acyl transferase (305 aa).

Residues Ser116, Asp213, and His243 each act as charge relay system in the active site.

The protein belongs to the LuxD family.

It participates in lipid metabolism; fatty acid reduction for biolumincescence. Its function is as follows. Acyl transferase is part of the fatty acid reductase system required for aldehyde biosynthesis; it produces fatty acids for the luminescent reaction. This chain is Acyl transferase, found in Photobacterium leiognathi.